Here is a 101-residue protein sequence, read N- to C-terminus: UPF0235 protein Mevan_0378 (101 aa).

It belongs to the UPF0235 family.

The protein is UPF0235 protein Mevan_0378 of Methanococcus vannielii (strain ATCC 35089 / DSM 1224 / JCM 13029 / OCM 148 / SB).